We begin with the raw amino-acid sequence, 460 residues long: Elongation factor 1-alpha (460 aa).

Gly2 carries the n,N,N-trimethylglycine modification. Lys3 is subject to N6,N6-dimethyllysine; alternate. Lys3 carries the N6-methyllysine; alternate modification. In terms of domain architecture, tr-type G spans 5–240 (KLHVNVVVIG…DAIEPPVRPS (236 aa)). Residues 14–21 (GHVDSGKS) are G1. Position 14–21 (14–21 (GHVDSGKS)) interacts with GTP. Position 30 is an N6-methyllysine (Lys30). The tract at residues 70–74 (GITID) is G2. The residue at position 79 (Lys79) is an N6,N6,N6-trimethyllysine. A G3 region spans residues 91–94 (DAPG). GTP contacts are provided by residues 91 to 95 (DAPGH) and 153 to 156 (NKMD). A G4 region spans residues 153-156 (NKMD). The segment at 192 to 194 (SGW) is G5. Lys316 is subject to N6,N6-dimethyllysine; alternate. An N6-methyllysine; alternate modification is found at Lys316. Residue Lys390 is modified to N6-methyllysine.

It belongs to the TRAFAC class translation factor GTPase superfamily. Classic translation factor GTPase family. EF-Tu/EF-1A subfamily.

It localises to the cytoplasm. Its function is as follows. This protein promotes the GTP-dependent binding of aminoacyl-tRNA to the A-site of ribosomes during protein biosynthesis. This is Elongation factor 1-alpha (TEF1) from Schizophyllum commune (Split gill fungus).